Consider the following 287-residue polypeptide: Fructose-1,6-bisphosphatase class 1 (287 aa).

Glu-67, Asp-87, Leu-89, and Asp-90 together coordinate Mg(2+). Substrate contacts are provided by residues 90 to 93 (DGSS), Tyr-195, and Lys-225. Position 231 (Glu-231) interacts with Mg(2+).

This sequence belongs to the FBPase class 1 family. Homotetramer. The cofactor is Mg(2+).

The protein localises to the cytoplasm. It carries out the reaction beta-D-fructose 1,6-bisphosphate + H2O = beta-D-fructose 6-phosphate + phosphate. It participates in carbohydrate biosynthesis; gluconeogenesis. In Halobacterium salinarum (strain ATCC 29341 / DSM 671 / R1), this protein is Fructose-1,6-bisphosphatase class 1.